We begin with the raw amino-acid sequence, 325 residues long: Elongation factor P--(R)-beta-lysine ligase (325 aa).

Position 76–78 (76–78 (SPE)) interacts with substrate. ATP is bound by residues 100–102 (RNE) and asparagine 109. Tyrosine 118 lines the substrate pocket. Position 244 to 245 (244 to 245 (EL)) interacts with ATP. Glutamate 251 provides a ligand contact to substrate. Glycine 300 contacts ATP.

Belongs to the class-II aminoacyl-tRNA synthetase family. EpmA subfamily. Homodimer.

It carries out the reaction D-beta-lysine + L-lysyl-[protein] + ATP = N(6)-((3R)-3,6-diaminohexanoyl)-L-lysyl-[protein] + AMP + diphosphate + H(+). In terms of biological role, with EpmB is involved in the beta-lysylation step of the post-translational modification of translation elongation factor P (EF-P). Catalyzes the ATP-dependent activation of (R)-beta-lysine produced by EpmB, forming a lysyl-adenylate, from which the beta-lysyl moiety is then transferred to the epsilon-amino group of a conserved specific lysine residue in EF-P. This is Elongation factor P--(R)-beta-lysine ligase from Citrobacter koseri (strain ATCC BAA-895 / CDC 4225-83 / SGSC4696).